Reading from the N-terminus, the 329-residue chain is Protein-arginine N-acetylglucosaminyltransferase NleB1 (329 aa).

Arg13 carries N-beta-linked (GlcNAc) arginine; by autocatalysis glycosylation. 48-50 is a binding site for UDP-N-acetyl-alpha-D-glucosamine; it reads QWF. Residue Arg53 is glycosylated (N-beta-linked (GlcNAc) arginine; by autocatalysis). Position 72 (Tyr72) interacts with UDP-N-acetyl-alpha-D-glucosamine. N-beta-linked (GlcNAc) arginine; by autocatalysis glycosylation occurs at Arg159. 219 to 222 serves as a coordination point for UDP-N-acetyl-alpha-D-glucosamine; that stretch reads YLDA. The short motif at 221 to 223 is the DXD motif element; the sequence is DAD. Asp223 contributes to the Mn(2+) binding site. Glu253 functions as the Proton acceptor in the catalytic mechanism. Arg293 carries N-beta-linked (GlcNAc) arginine; by autocatalysis glycosylation. Residues Asn320 and Ser322 each contribute to the Mn(2+) site. Residues Ser322 and 327–329 each bind UDP-N-acetyl-alpha-D-glucosamine; that span reads SSW.

This sequence belongs to the glycosyltransferase NleB family. Requires Mn(2+) as cofactor. Auto-glycosylated: arginine GlcNAcylation is required for activity toward death domain-containing host target proteins.

The protein resides in the secreted. Its subcellular location is the host cytoplasm. The enzyme catalyses L-arginyl-[protein] + UDP-N-acetyl-alpha-D-glucosamine = N(omega)-(N-acetyl-beta-D-glucosaminyl)-L-arginyl-[protein] + UDP + H(+). Protein-arginine N-acetylglucosaminyltransferase effector that disrupts TNF signaling in infected cells, including NF-kappa-B signaling, apoptosis and necroptosis. Acts by catalyzing the transfer of a single N-acetylglucosamine (GlcNAc) to a conserved arginine residue in the death domain of host proteins FADD, TRADD, FAS, TNFRSF1A/TNFR1, TNFRSF25/DR3 and RIPK1: arginine GlcNAcylation prevents homotypic/heterotypic death domain interactions and assembly of the oligomeric TNF-alpha receptor complex, thereby disrupting TNF signaling. Has preference for host FADD as substrate compared to other death domain-containing proteins. Also acts on host proteins without a death domain: catalyzes arginine GlcNAcylation of HIF1A, thereby regulating host glucose metabolism. Also displays intra-bacterial activity by mediating GlcNAcylation of glutathione synthetase GshB. Catalyzes auto-GlcNAcylation, which is required for activity toward death domain-containing host target proteins. Shows a higher enzymatic activity than NleB2. The protein is Protein-arginine N-acetylglucosaminyltransferase NleB1 of Escherichia coli O127:H6 (strain E2348/69 / EPEC).